The sequence spans 615 residues: Proteasome-associated ATPase (615 aa).

Residues 1 to 27 (MSESERSEASEVFGTSPDSRLSSEDAA) are disordered. The stretch at 22-99 (SSEDAAELEQ…LREEVDRLGQ (78 aa)) forms a coiled coil. 302–307 (GCGKTL) is a binding site for ATP. The tract at residues 614 to 615 (YL) is docks into pockets in the proteasome alpha-ring.

This sequence belongs to the AAA ATPase family. Homohexamer. Assembles into a hexameric ring structure that caps the 20S proteasome core. Strongly interacts with the prokaryotic ubiquitin-like protein Pup through a hydrophobic interface; the interacting region of ARC lies in its N-terminal coiled-coil domain. There is one Pup binding site per ARC hexamer ring. Upon ATP-binding, the C-terminus of ARC interacts with the alpha-rings of the proteasome core, possibly by binding to the intersubunit pockets.

Its pathway is protein degradation; proteasomal Pup-dependent pathway. In terms of biological role, ATPase which is responsible for recognizing, binding, unfolding and translocation of pupylated proteins into the bacterial 20S proteasome core particle. May be essential for opening the gate of the 20S proteasome via an interaction with its C-terminus, thereby allowing substrate entry and access to the site of proteolysis. Thus, the C-termini of the proteasomal ATPase may function like a 'key in a lock' to induce gate opening and therefore regulate proteolysis. In Mycolicibacterium vanbaalenii (strain DSM 7251 / JCM 13017 / BCRC 16820 / KCTC 9966 / NRRL B-24157 / PYR-1) (Mycobacterium vanbaalenii), this protein is Proteasome-associated ATPase.